The chain runs to 103 residues: Large ribosomal subunit protein uL23 (103 aa).

Belongs to the universal ribosomal protein uL23 family. Part of the 50S ribosomal subunit. Contacts protein L29, and trigger factor when it is bound to the ribosome.

In terms of biological role, one of the early assembly proteins it binds 23S rRNA. One of the proteins that surrounds the polypeptide exit tunnel on the outside of the ribosome. Forms the main docking site for trigger factor binding to the ribosome. This Zymomonas mobilis subsp. mobilis (strain ATCC 31821 / ZM4 / CP4) protein is Large ribosomal subunit protein uL23.